Here is a 64-residue protein sequence, read N- to C-terminus: Short neurotoxin 1 (64 aa).

Cystine bridges form between C3–C26, C20–C43, C45–C56, and C57–C62.

The protein belongs to the three-finger toxin family. Short-chain subfamily. Type I alpha-neurotoxin sub-subfamily. As to expression, expressed by the venom gland.

Its subcellular location is the secreted. Binds to muscle nicotinic acetylcholine receptor (nAChR) and inhibit acetylcholine from binding to the receptor, thereby impairing neuromuscular transmission. This is Short neurotoxin 1 from Bungarus fasciatus (Banded krait).